A 259-amino-acid chain; its full sequence is S-methyl-5'-thioadenosine phosphorylase (259 aa).

Phosphate contacts are provided by residues Ser9 and 50–51; that span reads RH. Met175 serves as a coordination point for substrate. Thr176 lines the phosphate pocket. Residue 199-201 coordinates substrate; the sequence is DLD.

The protein belongs to the PNP/MTAP phosphorylase family. MTAP subfamily. Homohexamer. Dimer of a homotrimer.

The catalysed reaction is S-methyl-5'-thioadenosine + phosphate = 5-(methylsulfanyl)-alpha-D-ribose 1-phosphate + adenine. The protein operates within amino-acid biosynthesis; L-methionine biosynthesis via salvage pathway; S-methyl-5-thio-alpha-D-ribose 1-phosphate from S-methyl-5'-thioadenosine (phosphorylase route): step 1/1. Its function is as follows. Catalyzes the reversible phosphorylation of S-methyl-5'-thioadenosine (MTA) to adenine and 5-methylthioribose-1-phosphate. Involved in the breakdown of MTA, a major by-product of polyamine biosynthesis. Responsible for the first step in the methionine salvage pathway after MTA has been generated from S-adenosylmethionine. Has broad substrate specificity with 6-aminopurine nucleosides as preferred substrates. The protein is S-methyl-5'-thioadenosine phosphorylase of Mycolicibacterium smegmatis (strain ATCC 700084 / mc(2)155) (Mycobacterium smegmatis).